Consider the following 145-residue polypeptide: Large ribosomal subunit protein uL13 (145 aa).

It belongs to the universal ribosomal protein uL13 family. Part of the 50S ribosomal subunit.

Its function is as follows. This protein is one of the early assembly proteins of the 50S ribosomal subunit, although it is not seen to bind rRNA by itself. It is important during the early stages of 50S assembly. The sequence is that of Large ribosomal subunit protein uL13 from Staphylococcus epidermidis (strain ATCC 35984 / DSM 28319 / BCRC 17069 / CCUG 31568 / BM 3577 / RP62A).